The primary structure comprises 438 residues: Ornithine aminotransferase car2 (438 aa).

K275 is modified (N6-(pyridoxal phosphate)lysine).

The protein belongs to the class-III pyridoxal-phosphate-dependent aminotransferase family. It depends on pyridoxal 5'-phosphate as a cofactor.

The protein localises to the cytoplasm. Its subcellular location is the nucleus. The enzyme catalyses a 2-oxocarboxylate + L-ornithine = L-glutamate 5-semialdehyde + an L-alpha-amino acid. The protein operates within amino-acid biosynthesis; L-proline biosynthesis; L-glutamate 5-semialdehyde from L-ornithine: step 1/1. This is Ornithine aminotransferase car2 (car2) from Schizosaccharomyces pombe (strain 972 / ATCC 24843) (Fission yeast).